A 269-amino-acid polypeptide reads, in one-letter code: Protein MGF 110-1L (269 aa).

Residue Met-1 is a topological domain, cytoplasmic. The A repeat unit spans residues 1–145 (MLGLQIFTLL…YVRKRSLQTV (145 aa)). The chain crosses the membrane as a helical span at residues 2–18 (LGLQIFTLLSIPTLLYT). Over 19-116 (YELELLDLTR…HEWHEAVIRK (98 aa)) the chain is Extracellular. Residue Asn-75 is glycosylated (N-linked (GlcNAc...) asparagine; by host). A helical transmembrane segment spans residues 117-137 (WQKLLTYGFYLVGCVLVANYV). Over 138-144 (RKRSLQT) the chain is Cytoplasmic. A helical transmembrane segment spans residues 145–165 (VMYLLVLLVIFFLLSQLMLYR). One copy of the B repeat lies at 147–269 (YLLVLLVIFF…DNLMKKQDMM (123 aa)). The Extracellular portion of the chain corresponds to 166–269 (ELEDKKHKIG…DNLMKKQDMM (104 aa)).

The protein belongs to the asfivirus MGF 110 family.

The protein resides in the host membrane. Its function is as follows. Plays a role in virus cell tropism, and may be required for efficient virus replication in macrophages. This chain is Protein MGF 110-1L, found in African swine fever virus (isolate Tick/South Africa/Pretoriuskop Pr4/1996) (ASFV).